A 64-amino-acid polypeptide reads, in one-letter code: MPKAKTHSGASKRFRTTGSGKIVRQKANRRHLLEHKPTSRTRRLDGRAVVAENDAKRVKKMLTG.

2 stretches are compositionally biased toward basic residues: residues 1-15 and 23-33; these read MPKA…KRFR and VRQKANRRHLL. The tract at residues 1-47 is disordered; that stretch reads MPKAKTHSGASKRFRTTGSGKIVRQKANRRHLLEHKPTSRTRRLDGR. The segment covering 34–46 has biased composition (basic and acidic residues); it reads EHKPTSRTRRLDG.

This sequence belongs to the bacterial ribosomal protein bL35 family.

This is Large ribosomal subunit protein bL35 from Mycobacteroides abscessus (strain ATCC 19977 / DSM 44196 / CCUG 20993 / CIP 104536 / JCM 13569 / NCTC 13031 / TMC 1543 / L948) (Mycobacterium abscessus).